The sequence spans 186 residues: Ribosome-recycling factor (186 aa).

The protein belongs to the RRF family.

Its subcellular location is the cytoplasm. Functionally, responsible for the release of ribosomes from messenger RNA at the termination of protein biosynthesis. May increase the efficiency of translation by recycling ribosomes from one round of translation to another. This is Ribosome-recycling factor from Porphyromonas gingivalis (strain ATCC BAA-308 / W83).